We begin with the raw amino-acid sequence, 363 residues long: Caffeic acid 3-O-methyltransferase (363 aa).

Residue 130–136 (MNQDKVL) coordinates substrate. Positions 162 to 180 (AFEYHGKDPRFNKVFNQGM) are substrate binding. Positions 208, 231, 251, 252, and 265 each coordinate S-adenosyl-L-methionine. Residue H269 is the Proton acceptor of the active site.

Belongs to the class I-like SAM-binding methyltransferase superfamily. Cation-independent O-methyltransferase family. COMT subfamily. As to quaternary structure, homodimer.

It catalyses the reaction (E)-caffeate + S-adenosyl-L-methionine = (E)-ferulate + S-adenosyl-L-homocysteine + H(+). The protein operates within aromatic compound metabolism; phenylpropanoid biosynthesis. Its function is as follows. Catalyzes the conversion of caffeic acid to ferulic acid and of 5-hydroxyferulic acid to sinapic acid. The resulting products may subsequently be converted to the corresponding alcohols that are incorporated into lignins. The polypeptide is Caffeic acid 3-O-methyltransferase (COMT1) (Catharanthus roseus (Madagascar periwinkle)).